A 216-amino-acid polypeptide reads, in one-letter code: Serine acetyltransferase (216 aa).

Belongs to the transferase hexapeptide repeat family.

The protein localises to the cytoplasm. It carries out the reaction L-serine + acetyl-CoA = O-acetyl-L-serine + CoA. It participates in amino-acid biosynthesis; L-cysteine biosynthesis; L-cysteine from L-serine: step 1/2. This chain is Serine acetyltransferase (cysE), found in Staphylococcus xylosus.